A 122-amino-acid polypeptide reads, in one-letter code: Large ribosomal subunit protein uL18 (122 aa).

It belongs to the universal ribosomal protein uL18 family. In terms of assembly, part of the 50S ribosomal subunit; part of the 5S rRNA/L5/L18/L25 subcomplex. Contacts the 5S and 23S rRNAs.

Its function is as follows. This is one of the proteins that bind and probably mediate the attachment of the 5S RNA into the large ribosomal subunit, where it forms part of the central protuberance. The sequence is that of Large ribosomal subunit protein uL18 from Heliobacterium modesticaldum (strain ATCC 51547 / Ice1).